Consider the following 199-residue polypeptide: uncharacterized protein (199 aa).

This is an uncharacterized protein from Shigella flexneri.